Reading from the N-terminus, the 267-residue chain is Putative phosphoenolpyruvate synthase regulatory protein (267 aa).

G147–T154 lines the ADP pocket.

Belongs to the pyruvate, phosphate/water dikinase regulatory protein family. PSRP subfamily.

It catalyses the reaction [pyruvate, water dikinase] + ADP = [pyruvate, water dikinase]-phosphate + AMP + H(+). It carries out the reaction [pyruvate, water dikinase]-phosphate + phosphate + H(+) = [pyruvate, water dikinase] + diphosphate. Its function is as follows. Bifunctional serine/threonine kinase and phosphorylase involved in the regulation of the phosphoenolpyruvate synthase (PEPS) by catalyzing its phosphorylation/dephosphorylation. The sequence is that of Putative phosphoenolpyruvate synthase regulatory protein from Cupriavidus necator (strain ATCC 17699 / DSM 428 / KCTC 22496 / NCIMB 10442 / H16 / Stanier 337) (Ralstonia eutropha).